The chain runs to 304 residues: Endonuclease III-like protein 1 (304 aa).

The N-terminal 22 residues, 1-22, are a transit peptide targeting the mitochondrion; it reads MTALSARMLTRSRSLGPGAGPR. Residues 1–72 are disordered; it reads MTALSARMLT…SDSEKGEGAE (72 aa). The span at 23-42 shows a compositional bias: basic and acidic residues; sequence GCREEPGPLRRREAAAEARK. A Bipartite nuclear localization signal motif is present at residues 28-52; the sequence is PGPLRRREAAAEARKSHSPVKRPRK. Positions 43–55 are enriched in basic residues; sequence SHSPVKRPRKAQR. S63 and S65 each carry phosphoserine. A HhH domain is found at 191 to 215; sequence HYGGDIPASVAELVALPGVGPKMAH. K212 serves as the catalytic Nucleophile; for N-glycosylase activity. Residues C282, C289, C292, and C298 each coordinate [4Fe-4S] cluster.

This sequence belongs to the Nth/MutY family. As to quaternary structure, interacts with YBX1. Interacts with ERCC5/XPG; the interaction stimulates NTHL1 activity and NTHL1 binding to its DNA substrate. The cofactor is [4Fe-4S] cluster. In terms of processing, ubiquitinated by TRIM26; leading to proteasomal degradation. Widely expressed with highest levels in heart and lowest levels in lung and liver.

It is found in the nucleus. It localises to the mitochondrion. The catalysed reaction is 2'-deoxyribonucleotide-(2'-deoxyribose 5'-phosphate)-2'-deoxyribonucleotide-DNA = a 3'-end 2'-deoxyribonucleotide-(2,3-dehydro-2,3-deoxyribose 5'-phosphate)-DNA + a 5'-end 5'-phospho-2'-deoxyribonucleoside-DNA + H(+). APE1 displaces NTHL1 from the N-glycosylase-generated AP site in DNA, thereby increasing the turnover of the DNA N-glycosylase activity. AP lyase activity is stimulated by YBX1. ERCC5/XPG stimulates NTHL1 activity and NTHL1 binding to its DNA substrate. In terms of biological role, bifunctional DNA N-glycosylase with associated apurinic/apyrimidinic (AP) lyase function that catalyzes the first step in base excision repair (BER), the primary repair pathway for the repair of oxidative DNA damage. The DNA N-glycosylase activity releases the damaged DNA base from DNA by cleaving the N-glycosidic bond, leaving an AP site. The AP-lyase activity cleaves the phosphodiester bond 3' to the AP site by a beta-elimination. Primarily recognizes and repairs oxidative base damage of pyrimidines. Also has 8-oxo-7,8-dihydroguanine (8-oxoG) DNA glycosylase activity. Acts preferentially on DNA damage opposite guanine residues in DNA. Is able to process lesions in nucleosomes without requiring or inducing nucleosome disruption. The polypeptide is Endonuclease III-like protein 1 (Homo sapiens (Human)).